Here is a 147-residue protein sequence, read N- to C-terminus: Small ribosomal subunit protein uS12 (147 aa).

Belongs to the universal ribosomal protein uS12 family. As to quaternary structure, part of the 30S ribosomal subunit.

Functionally, with S4 and S5 plays an important role in translational accuracy. Located at the interface of the 30S and 50S subunits. The sequence is that of Small ribosomal subunit protein uS12 from Pyrococcus abyssi (strain GE5 / Orsay).